A 403-amino-acid polypeptide reads, in one-letter code: Phosphopentomutase (403 aa).

Mn(2+)-binding residues include aspartate 13, aspartate 298, histidine 303, aspartate 339, histidine 340, and histidine 351.

It belongs to the phosphopentomutase family. Mn(2+) serves as cofactor.

Its subcellular location is the cytoplasm. It catalyses the reaction 2-deoxy-alpha-D-ribose 1-phosphate = 2-deoxy-D-ribose 5-phosphate. The enzyme catalyses alpha-D-ribose 1-phosphate = D-ribose 5-phosphate. Its pathway is carbohydrate degradation; 2-deoxy-D-ribose 1-phosphate degradation; D-glyceraldehyde 3-phosphate and acetaldehyde from 2-deoxy-alpha-D-ribose 1-phosphate: step 1/2. Its function is as follows. Isomerase that catalyzes the conversion of deoxy-ribose 1-phosphate (dRib-1-P) and ribose 1-phosphate (Rib-1-P) to deoxy-ribose 5-phosphate (dRib-5-P) and ribose 5-phosphate (Rib-5-P), respectively. The protein is Phosphopentomutase of Streptococcus gordonii (strain Challis / ATCC 35105 / BCRC 15272 / CH1 / DL1 / V288).